The primary structure comprises 162 residues: Glycine cleavage system H protein, mitochondrial (162 aa).

The transit peptide at 1–31 (MALRMWASSTANALRLSSATRPHFSPLSRCF) directs the protein to the mitochondrion. The Lipoyl-binding domain occupies 53 to 135 (VATIGITDHA…YEDGWMIKVK (83 aa)). K94 is modified (N6-lipoyllysine).

The protein belongs to the GcvH family. As to quaternary structure, the glycine cleavage system is composed of four proteins: P, T, L and H. The cofactor is (R)-lipoate.

The protein resides in the mitochondrion. Functionally, the glycine cleavage system catalyzes the degradation of glycine. The H protein shuttles the methylamine group of glycine from the P protein to the T protein. This is Glycine cleavage system H protein, mitochondrial (GDCSH) from Flaveria anomala (Yellowtops).